The chain runs to 254 residues: Large ribosomal subunit protein uL2 (254 aa).

This sequence belongs to the universal ribosomal protein uL2 family.

This Candida glabrata (strain ATCC 2001 / BCRC 20586 / JCM 3761 / NBRC 0622 / NRRL Y-65 / CBS 138) (Yeast) protein is Large ribosomal subunit protein uL2 (RPL2).